Consider the following 310-residue polypeptide: Apolipoprotein E (310 aa).

An N-terminal signal peptide occupies residues 1 to 18; the sequence is MKVLWAALVVTLLAGCQA. Tandem repeats lie at residues 77-98, 99-120, 121-142, and 143-164. Residues 77-248 form an 8 X 22 AA approximate tandem repeats region; sequence ALMEETMKEV…RLDEVREQVQ (172 aa). Methionine 140 bears the Methionine sulfoxide mark. Serine 144 bears the Phosphoserine mark. Positions 155-165 are LDL and other lipoprotein receptors binding; that stretch reads HLRKLRKRLLR. Residue 159–162 participates in heparin binding; that stretch reads LRKR. Positions 165–186 form a repeat; it reads RDAEDLQKRLAVYQAGIREGAE. 3 consecutive repeat copies span residues 187–204, 205–226, and 227–248. Positions 203 to 283 are lipid-binding and lipoprotein association; that stretch reads AATVRSLISK…SWFEPLVQDM (81 aa). 222-229 serves as a coordination point for heparin; it reads GQRLRGRL. The homooligomerization stretch occupies residues 259 to 310; it reads NQMRLQAEAFHARLKSWFEPLVQDMQQKWAELVEKVQLAVGTSPTSESSEKQ. Residues 271–283 are specificity for association with VLDL; sequence RLKSWFEPLVQDM.

It belongs to the apolipoprotein A1/A4/E family. As to quaternary structure, homotetramer. May interact with ABCA1; functionally associated with ABCA1 in the biogenesis of HDLs. May interact with APP/A4 amyloid-beta peptide; the interaction is extremely stable in vitro but its physiological significance is unclear. May interact with MAPT. May interact with MAP2. In the cerebrospinal fluid, interacts with secreted SORL1. Interacts with PMEL; this allows the loading of PMEL luminal fragment on ILVs to induce fibril nucleation. Post-translationally, APOE exists as multiple glycosylated and sialylated glycoforms within cells and in plasma. The extent of glycosylation and sialylation are tissue and context specific. In terms of processing, glycated in plasma VLDL. Phosphorylated by FAM20C in the extracellular medium.

The protein resides in the secreted. The protein localises to the extracellular space. It is found in the extracellular matrix. It localises to the extracellular vesicle. Its subcellular location is the endosome. The protein resides in the multivesicular body. APOE is an apolipoprotein, a protein associating with lipid particles, that mainly functions in lipoprotein-mediated lipid transport between organs via the plasma and interstitial fluids. APOE is a core component of plasma lipoproteins and is involved in their production, conversion and clearance. Apolipoproteins are amphipathic molecules that interact both with lipids of the lipoprotein particle core and the aqueous environment of the plasma. As such, APOE associates with chylomicrons, chylomicron remnants, very low density lipoproteins (VLDL) and intermediate density lipoproteins (IDL) but shows a preferential binding to high-density lipoproteins (HDL). It also binds a wide range of cellular receptors including the LDL receptor/LDLR, the LDL receptor-related proteins LRP1, LRP2 and LRP8 and the very low-density lipoprotein receptor/VLDLR that mediate the cellular uptake of the APOE-containing lipoprotein particles. Finally, APOE also has a heparin-binding activity and binds heparan-sulfate proteoglycans on the surface of cells, a property that supports the capture and the receptor-mediated uptake of APOE-containing lipoproteins by cells. A main function of APOE is to mediate lipoprotein clearance through the uptake of chylomicrons, VLDLs, and HDLs by hepatocytes. APOE is also involved in the biosynthesis by the liver of VLDLs as well as their uptake by peripheral tissues ensuring the delivery of triglycerides and energy storage in muscle, heart and adipose tissues. By participating in the lipoprotein-mediated distribution of lipids among tissues, APOE plays a critical role in plasma and tissues lipid homeostasis. APOE is also involved in two steps of reverse cholesterol transport, the HDLs-mediated transport of cholesterol from peripheral tissues to the liver, and thereby plays an important role in cholesterol homeostasis. First, it is functionally associated with ABCA1 in the biogenesis of HDLs in tissues. Second, it is enriched in circulating HDLs and mediates their uptake by hepatocytes. APOE also plays an important role in lipid transport in the central nervous system, regulating neuron survival and sprouting. This Tapirus terrestris (Lowland tapir) protein is Apolipoprotein E (APOE).